The following is a 100-amino-acid chain: Large ribosomal subunit protein eL36B (100 aa).

It belongs to the eukaryotic ribosomal protein eL36 family. As to quaternary structure, component of the large ribosomal subunit (LSU). Mature yeast ribosomes consist of a small (40S) and a large (60S) subunit. The 40S small subunit contains 1 molecule of ribosomal RNA (18S rRNA) and 33 different proteins (encoded by 57 genes). The large 60S subunit contains 3 rRNA molecules (25S, 5.8S and 5S rRNA) and 46 different proteins (encoded by 81 genes).

It localises to the cytoplasm. In terms of biological role, component of the ribosome, a large ribonucleoprotein complex responsible for the synthesis of proteins in the cell. The small ribosomal subunit (SSU) binds messenger RNAs (mRNAs) and translates the encoded message by selecting cognate aminoacyl-transfer RNA (tRNA) molecules. The large subunit (LSU) contains the ribosomal catalytic site termed the peptidyl transferase center (PTC), which catalyzes the formation of peptide bonds, thereby polymerizing the amino acids delivered by tRNAs into a polypeptide chain. The nascent polypeptides leave the ribosome through a tunnel in the LSU and interact with protein factors that function in enzymatic processing, targeting, and the membrane insertion of nascent chains at the exit of the ribosomal tunnel. In Saccharomyces cerevisiae (strain ATCC 204508 / S288c) (Baker's yeast), this protein is Large ribosomal subunit protein eL36B.